The sequence spans 391 residues: Matrix metalloproteinase-23 (391 aa).

Over 1–19 (MGWRACLRPEASGAVQGRW) the chain is Cytoplasmic. The propeptide occupies 1-79 (MGWRACLRPE…LSMLVTRRRR (79 aa)). A helical; Signal-anchor for type II membrane protein transmembrane segment spans residues 20-38 (LGAVLSGLCLLSALAFLEW). Topologically, residues 39–391 (LGSPTETAWN…TYSWRVRVRS (353 aa)) are lumenal. N-linked (GlcNAc...) asparagine glycans are attached at residues Asn-93 and Asn-149. A Zn(2+)-binding site is contributed by His-212. Glu-213 is an active-site residue. Zn(2+) contacts are provided by His-216 and His-222. Asn-233 is a glycosylation site (N-linked (GlcNAc...) asparagine). In terms of domain architecture, ShKT spans 256 to 290 (CLDRIFVCTSWARKGFCDVRQRLMKRLCPRSCDFC). Disulfide bonds link Cys-256–Cys-290, Cys-263–Cys-283, and Cys-272–Cys-287. The region spanning 296 to 381 (PTVATTTSPT…VVRHRQRVLT (86 aa)) is the Ig-like C2-type domain. Asn-317 is a glycosylation site (N-linked (GlcNAc...) asparagine). Cys-322 and Cys-371 are joined by a disulfide.

The protein belongs to the peptidase M10A family. Zn(2+) serves as cofactor. Post-translationally, N-glycosylated. In terms of processing, proteolytic cleavage might yield an active form. As to expression, expressed at the highest levels in ovary and uterus. In ovary expression is strictly confined to granulosa cells of preantral and small antral follicles. Detected also in testis and prostate.

It localises to the membrane. It is found in the endoplasmic reticulum membrane. With respect to regulation, inhibited by TIMP2. Functionally, protease. May regulate the surface expression of some potassium channels by retaining them in the endoplasmic reticulum. This chain is Matrix metalloproteinase-23 (Mmp23), found in Rattus norvegicus (Rat).